We begin with the raw amino-acid sequence, 146 residues long: Hemoglobin subunit beta (146 aa).

The Globin domain occupies 2–146 (HWSAEEKQLI…VAHALARKYH (145 aa)). 2 residues coordinate heme b: H63 and H92.

It belongs to the globin family. As to quaternary structure, heterotetramer of two alpha chains and two beta chains. As to expression, red blood cells.

Involved in oxygen transport from the lung to the various peripheral tissues. This chain is Hemoglobin subunit beta (HBB), found in Aptenodytes forsteri (Emperor penguin).